The chain runs to 224 residues: Ribose-5-phosphate isomerase A (224 aa).

Residues 26–29 (TGST), 81–84 (DGAD), and 94–97 (KGGG) each bind substrate. Glutamate 103 acts as the Proton acceptor in catalysis. Lysine 121 lines the substrate pocket.

Belongs to the ribose 5-phosphate isomerase family. As to quaternary structure, homodimer.

The enzyme catalyses aldehydo-D-ribose 5-phosphate = D-ribulose 5-phosphate. Its pathway is carbohydrate degradation; pentose phosphate pathway; D-ribose 5-phosphate from D-ribulose 5-phosphate (non-oxidative stage): step 1/1. In terms of biological role, catalyzes the reversible conversion of ribose-5-phosphate to ribulose 5-phosphate. The protein is Ribose-5-phosphate isomerase A of Listeria monocytogenes serovar 1/2a (strain ATCC BAA-679 / EGD-e).